Consider the following 681-residue polypeptide: PTS system glucose-specific EIICBA component (681 aa).

The 412-residue stretch at 3–414 (KKLFGQLQRI…LKYKTPGRED (412 aa)) folds into the PTS EIIC type-1 domain. 10 helical membrane-spanning segments follow: residues 16-36 (LMLPVAILPAAGLLLAIGTAM), 73-93 (MIFALGVAIGLAGGDGVAAIA), 126-146 (ILGIPTLQTGVFGGIIIGALA), 170-190 (FVPIMMATTSFILAFPMALIW), 199-219 (AFSTGLLDSNTGVAVFLFGFI), 273-293 (FMQGEFPVMMFGLPAAALAIY), 303-323 (VVAGLMGSAALTSFLTGITEP), 328-348 (FLFVAPLLFFIHAVLDGLSFL), 355-375 (LHLGYTFSGGFIDYFLLGILP), and 383-403 (VIPVGLVYAVIYYFVFRFLIV). Positions 425 to 506 (TELPYAVLEA…QQIMNGQVVE (82 aa)) constitute a PTS EIIB type-1 domain. Catalysis depends on C447, which acts as the Phosphocysteine intermediate; for EIIB activity. A PTS EIIA type-1 domain is found at 551 to 655 (DQVFSEKMMG…SDITPIIVTQ (105 aa)). H603 functions as the Tele-phosphohistidine intermediate; for EIIA activity in the catalytic mechanism.

It is found in the cell membrane. It carries out the reaction N(pros)-phospho-L-histidyl-[protein] + D-glucose(out) = D-glucose 6-phosphate(in) + L-histidyl-[protein]. In terms of biological role, the phosphoenolpyruvate-dependent sugar phosphotransferase system (sugar PTS), a major carbohydrate active transport system, catalyzes the phosphorylation of incoming sugar substrates concomitantly with their translocation across the cell membrane. This system is involved in glucose transport. In Staphylococcus aureus (strain bovine RF122 / ET3-1), this protein is PTS system glucose-specific EIICBA component (ptsG).